The following is a 68-amino-acid chain: Protein SlyX homolog (68 aa).

The protein belongs to the SlyX family.

This chain is Protein SlyX homolog, found in Pseudomonas fluorescens (strain ATCC BAA-477 / NRRL B-23932 / Pf-5).